The chain runs to 209 residues: Response regulator protein VraR (209 aa).

A Response regulatory domain is found at 4–120; that stretch reads KVLFVDDHEM…DIADAVRKTS (117 aa). Asp-55 is modified (4-aspartylphosphate). In terms of domain architecture, HTH luxR-type spans 141-206; it reads RAELYEMLTE…QAVIYAFQHN (66 aa). A DNA-binding region (H-T-H motif) is located at residues 165 to 184; the sequence is NQEIASASHITIKTVKTHVS.

As to quaternary structure, homodimer. Phosphorylated by VraS. Phosphorylation state of VraR controls dimerization of the protein.

Functionally, member of the two-component regulatory system VraS/VraR involved in the control of the cell wall peptidoglycan biosynthesis. Upon cellular stress, the histidine kinase VraS transfers the phosphoryl group onto VraR. Upon phosphorylation, VraR dimerizes at the N-terminal domain. In turn, phosphorylation-induced dimerization expand and enhance the VraR binding to its own promoter leading to increased expression and subsequent modulation of as many as 40 genes, which ultimately constitute the S.aureus response to cell wall damage. In addition, inhibits the host autophagic flux and delays the early stage of autophagosome formation, thereby promoting bacterial survival. Facilitates the ability of S.aureus to resist host polymorphonuclear leukocytes-mediated phagocytosis and killing thus contributing to immune evasion. This Staphylococcus aureus (strain NCTC 8325 / PS 47) protein is Response regulator protein VraR (vraR).